Here is a 349-residue protein sequence, read N- to C-terminus: MATATLTIDLDAIAANWRALDQMTASDCQTGAVVKADSYGLGAAKVAHALARAGARRFFVATCEEGADVRRALGSGPQICVFSGHMEGDTALIRDFDLTPMLNSIDQLTRHFEALGGQPFGLQLDSGMNRLGLEPGEWEAVAGFALEAGPELLMSHLACSDDPDHPMNAEQLGAFRAMTDGTGVPRSLSATGGILLGPAWHFELTRPGIGLYGGRPFENARPVVRLSLPVIQVREVEIGEPVGYSNTWTAEHTSTIATVAAGYADGLPRTLSSRATLYAGRVPCPLVGRVSMDLITVDVSHLPEVPETLDILGPHQTPDDLADTAGTIGYEILTSLGRRYQRRYGALAA.

Catalysis depends on Lys35, which acts as the Proton acceptor; specific for D-alanine. N6-(pyridoxal phosphate)lysine is present on Lys35. Residue Arg130 participates in substrate binding. Catalysis depends on Tyr244, which acts as the Proton acceptor; specific for L-alanine. Met292 is a binding site for substrate.

This sequence belongs to the alanine racemase family. Pyridoxal 5'-phosphate is required as a cofactor.

It carries out the reaction L-alanine = D-alanine. Its pathway is amino-acid biosynthesis; D-alanine biosynthesis; D-alanine from L-alanine: step 1/1. Functionally, catalyzes the interconversion of L-alanine and D-alanine. May also act on other amino acids. The chain is Alanine racemase (alr) from Cereibacter sphaeroides (strain ATCC 17023 / DSM 158 / JCM 6121 / CCUG 31486 / LMG 2827 / NBRC 12203 / NCIMB 8253 / ATH 2.4.1.) (Rhodobacter sphaeroides).